The sequence spans 431 residues: Ribonuclease TTHA0252 (431 aa).

H59, H61, D63, H64, H141, D162, and H400 together coordinate Zn(2+).

This sequence belongs to the metallo-beta-lactamase superfamily. RNA-metabolizing metallo-beta-lactamase-like family. As to quaternary structure, monomer. Requires Zn(2+) as cofactor.

Its subcellular location is the cytoplasm. Its activity is regulated as follows. Inhibited by cadmium, cobalt, manganese, magnesium, calcium and nickel ions. Has endoribonuclease activity towards 23S and 16S rRNA (in vitro). This chain is Ribonuclease TTHA0252, found in Thermus thermophilus (strain ATCC 27634 / DSM 579 / HB8).